A 331-amino-acid polypeptide reads, in one-letter code: Zinc finger protein 660 (331 aa).

The span at 1–12 (MRRKTRNFKHKT) shows a compositional bias: basic residues. A disordered region spans residues 1-35 (MRRKTRNFKHKTVKDNKVLTEGSDQESEKDNSQCC). Phosphoserine is present on serine 23. 10 C2H2-type zinc fingers span residues 50 to 72 (YVCT…ERIH), 78 to 100 (YKCK…RRIH), 106 to 128 (YTCS…QGIH), 134 to 156 (YECK…HRVH), 162 to 184 (YSCI…QRMH), 190 to 212 (YKCK…QRIH), 218 to 240 (YECD…QRLH), 246 to 268 (YKCN…QRVH), 274 to 296 (YKCN…LRTH), and 302 to 324 (YKCS…QRKH).

Belongs to the krueppel C2H2-type zinc-finger protein family.

Its subcellular location is the nucleus. Functionally, may be involved in transcriptional regulation. In Homo sapiens (Human), this protein is Zinc finger protein 660 (ZNF660).